We begin with the raw amino-acid sequence, 841 residues long: pre-rRNA 2'-O-ribose RNA methyltransferase FTSJ3 (841 aa).

Gly56, Trp58, Asp76, Asp92, and Asp117 together coordinate S-adenosyl-L-methionine. The Proton acceptor role is filled by Lys157. A disordered region spans residues 332-366 (ISLSSGEEDEGNEEDSTAGTTEQPSKEEEEEEQLN). Phosphoserine occurs at positions 333, 335, 336, 347, and 356. Residues 337–347 (GEEDEGNEEDS) show a composition bias toward acidic residues. Positions 356–404 (SKEEEEEEQLNQTLAEMKAQEVAELKRKKKKLLREQRKQRERVELKMDL) form a coiled coil. Lys357 is covalently cross-linked (Glycyl lysine isopeptide (Lys-Gly) (interchain with G-Cter in SUMO2)). Arg389 is modified (citrulline). The interval 454-482 (VSDVEDDGDDTSLDSDLDPEELAGVRGHQ) is disordered. Acidic residues predominate over residues 456 to 474 (DVEDDGDDTSLDSDLDPEE). Ser547 carries the post-translational modification Phosphoserine. Thr567 carries the post-translational modification Phosphothreonine. Lys573 participates in a covalent cross-link: Glycyl lysine isopeptide (Lys-Gly) (interchain with G-Cter in SUMO2). A Phosphoserine modification is found at Ser578. Residues 579–654 (PLYQDEAPKG…IVPIEDPAKH (76 aa)) are disordered. Lys637 participates in a covalent cross-link: Glycyl lysine isopeptide (Lys-Gly) (interchain with G-Cter in SUMO2). Ser638 bears the Phosphoserine mark. A Glycyl lysine isopeptide (Lys-Gly) (interchain with G-Cter in SUMO2) cross-link involves residue Lys653. Phosphoserine is present on Ser670. A Glycyl lysine isopeptide (Lys-Gly) (interchain with G-Cter in SUMO2) cross-link involves residue Lys672. A Phosphoserine modification is found at Ser682. Lys704 participates in a covalent cross-link: Glycyl lysine isopeptide (Lys-Gly) (interchain with G-Cter in SUMO2). Residues 733-771 (IKKVAEAKARKKRRMLKRLEQTRKKAEAVVNTVDISERE) are a coiled coil. Arg777 carries the citrulline modification. Positions 805-815 (VRRPAGVRGHF) are enriched in basic residues. The tract at residues 805 to 841 (VRRPAGVRGHFKVVDSRMKKDQRAQQRKEQKKKHKRK) is disordered. A compositionally biased stretch (basic and acidic residues) spans 816–832 (KVVDSRMKKDQRAQQRK).

Belongs to the class I-like SAM-binding methyltransferase superfamily. RNA methyltransferase RlmE family. SPB1 subfamily. Interacts with NIP7. In terms of processing, citrullinated by PADI4.

The protein localises to the nucleus. Its subcellular location is the nucleolus. It carries out the reaction a ribonucleotide in rRNA + S-adenosyl-L-methionine = a 2'-O-methylribonucleotide in rRNA + S-adenosyl-L-homocysteine + H(+). Its function is as follows. RNA 2'-O-methyltransferase involved in the processing of the 34S pre-rRNA to 18S rRNA and in 40S ribosomal subunit formation. The sequence is that of pre-rRNA 2'-O-ribose RNA methyltransferase FTSJ3 from Pongo abelii (Sumatran orangutan).